The chain runs to 242 residues: Uridylate kinase (242 aa).

An ATP-binding site is contributed by 16-19 (KVSG). Glycine 58 provides a ligand contact to UMP. ATP contacts are provided by glycine 59 and arginine 63. Residues aspartate 78 and 139–146 (TGNPFCTT) each bind UMP. The ATP site is built by threonine 166, glutamine 167, tyrosine 172, and aspartate 175.

The protein belongs to the UMP kinase family. In terms of assembly, homohexamer.

Its subcellular location is the cytoplasm. The catalysed reaction is UMP + ATP = UDP + ADP. It participates in pyrimidine metabolism; CTP biosynthesis via de novo pathway; UDP from UMP (UMPK route): step 1/1. With respect to regulation, inhibited by UTP. In terms of biological role, catalyzes the reversible phosphorylation of UMP to UDP. This chain is Uridylate kinase, found in Rickettsia prowazekii (strain Madrid E).